Here is a 226-residue protein sequence, read N- to C-terminus: Ribosomal RNA small subunit methyltransferase G (226 aa).

S-adenosyl-L-methionine is bound by residues Gly-86, Leu-91, 137–138, and Arg-150; that span reads VE.

It belongs to the methyltransferase superfamily. RNA methyltransferase RsmG family.

Its subcellular location is the cytoplasm. It catalyses the reaction guanosine(527) in 16S rRNA + S-adenosyl-L-methionine = N(7)-methylguanosine(527) in 16S rRNA + S-adenosyl-L-homocysteine. In terms of biological role, specifically methylates the N7 position of guanine in position 527 of 16S rRNA. The chain is Ribosomal RNA small subunit methyltransferase G from Polaromonas sp. (strain JS666 / ATCC BAA-500).